Consider the following 304-residue polypeptide: Bifunctional protein FolD (304 aa).

Residues Gly167 to Ser169, Ser192, and Ile233 each bind NADP(+).

This sequence belongs to the tetrahydrofolate dehydrogenase/cyclohydrolase family. In terms of assembly, homodimer.

The catalysed reaction is (6R)-5,10-methylene-5,6,7,8-tetrahydrofolate + NADP(+) = (6R)-5,10-methenyltetrahydrofolate + NADPH. The enzyme catalyses (6R)-5,10-methenyltetrahydrofolate + H2O = (6R)-10-formyltetrahydrofolate + H(+). It functions in the pathway one-carbon metabolism; tetrahydrofolate interconversion. Its function is as follows. Catalyzes the oxidation of 5,10-methylenetetrahydrofolate to 5,10-methenyltetrahydrofolate and then the hydrolysis of 5,10-methenyltetrahydrofolate to 10-formyltetrahydrofolate. This chain is Bifunctional protein FolD, found in Rhodospirillum centenum (strain ATCC 51521 / SW).